Reading from the N-terminus, the 84-residue chain is UPF0512 protein O (84 aa).

The protein belongs to the UPF0512 family.

The polypeptide is UPF0512 protein O (Dictyostelium discoideum (Social amoeba)).